Reading from the N-terminus, the 907-residue chain is Leucine--tRNA ligase (907 aa).

The 'HIGH' region motif lies at 42–52; the sequence is PYPSGKLHMGH. The 'KMSKS' region motif lies at 651–655; the sequence is TMSKS. ATP is bound at residue K654.

Belongs to the class-I aminoacyl-tRNA synthetase family.

Its subcellular location is the cytoplasm. The enzyme catalyses tRNA(Leu) + L-leucine + ATP = L-leucyl-tRNA(Leu) + AMP + diphosphate. This is Leucine--tRNA ligase from Verminephrobacter eiseniae (strain EF01-2).